We begin with the raw amino-acid sequence, 231 residues long: ATP phosphoribosyltransferase (231 aa).

This sequence belongs to the ATP phosphoribosyltransferase family. Short subfamily. As to quaternary structure, heteromultimer composed of HisG and HisZ subunits.

The protein localises to the cytoplasm. It carries out the reaction 1-(5-phospho-beta-D-ribosyl)-ATP + diphosphate = 5-phospho-alpha-D-ribose 1-diphosphate + ATP. It functions in the pathway amino-acid biosynthesis; L-histidine biosynthesis; L-histidine from 5-phospho-alpha-D-ribose 1-diphosphate: step 1/9. In terms of biological role, catalyzes the condensation of ATP and 5-phosphoribose 1-diphosphate to form N'-(5'-phosphoribosyl)-ATP (PR-ATP). Has a crucial role in the pathway because the rate of histidine biosynthesis seems to be controlled primarily by regulation of HisG enzymatic activity. The sequence is that of ATP phosphoribosyltransferase (hisG) from Rhizobium etli (strain ATCC 51251 / DSM 11541 / JCM 21823 / NBRC 15573 / CFN 42).